The sequence spans 34 residues: Photosystem I reaction center subunit XII (34 aa).

Residues Ile-5 to Leu-25 form a helical membrane-spanning segment.

The protein belongs to the PsaM family.

The protein localises to the cellular thylakoid membrane. The sequence is that of Photosystem I reaction center subunit XII from Synechococcus sp. (strain CC9902).